An 83-amino-acid chain; its full sequence is SPbeta prophage-derived uncharacterized protein YopE (83 aa).

Helical transmembrane passes span 5–25 (AYFL…FIFV) and 60–80 (VIAF…TKLF).

The protein localises to the cell membrane. The protein is SPbeta prophage-derived uncharacterized protein YopE (yopE) of Bacillus subtilis (strain 168).